Reading from the N-terminus, the 426-residue chain is Histone deacetylase 9 (426 aa).

The tract at residues 6–318 (KISYFYDGDV…WTVETGILLD (313 aa)) is histone deacetylase. Residue H137 is the Proton donor/acceptor of the active site. The Zn(2+) site is built by D172, H174, and D261. The disordered stretch occupies residues 383 to 426 (PDFYIPDFDEDEQNPDVRADQRSRDKQIQRDDEYFDGDNDNDAS). The span at 397 to 414 (PDVRADQRSRDKQIQRDD) shows a compositional bias: basic and acidic residues. A compositionally biased stretch (acidic residues) spans 415–426 (EYFDGDNDNDAS).

The protein belongs to the histone deacetylase family. HD type 1 subfamily. Interacts with AHL22. Binds to farnesylated ASG2 in the cytosol. Zn(2+) serves as cofactor.

It is found in the nucleus. The protein localises to the cytoplasm. The protein resides in the cytosol. It catalyses the reaction N(6)-acetyl-L-lysyl-[histone] + H2O = L-lysyl-[histone] + acetate. In terms of biological role, responsible for the deacetylation of lysine residues on the N-terminal part of the core histones (H2A, H2B, H3 and H4). Histone deacetylation gives a tag for epigenetic repression and plays an important role in transcriptional regulation, cell cycle progression and developmental events. Histone deacetylases act via the formation of large multiprotein complexes. The sequence is that of Histone deacetylase 9 (HDA9) from Arabidopsis thaliana (Mouse-ear cress).